The sequence spans 346 residues: Phosphoribosylformylglycinamidine cyclo-ligase (346 aa).

This sequence belongs to the AIR synthase family.

The protein resides in the cytoplasm. The catalysed reaction is 2-formamido-N(1)-(5-O-phospho-beta-D-ribosyl)acetamidine + ATP = 5-amino-1-(5-phospho-beta-D-ribosyl)imidazole + ADP + phosphate + H(+). Its pathway is purine metabolism; IMP biosynthesis via de novo pathway; 5-amino-1-(5-phospho-D-ribosyl)imidazole from N(2)-formyl-N(1)-(5-phospho-D-ribosyl)glycinamide: step 2/2. The polypeptide is Phosphoribosylformylglycinamidine cyclo-ligase (Alteromonas mediterranea (strain DSM 17117 / CIP 110805 / LMG 28347 / Deep ecotype)).